A 641-amino-acid polypeptide reads, in one-letter code: 1-deoxy-D-xylulose-5-phosphate synthase (641 aa).

Thiamine diphosphate-binding positions include His71 and 112–114 (SHA). Asp144 lines the Mg(2+) pocket. Thiamine diphosphate contacts are provided by residues 145–146 (GA), Asn173, Tyr284, and Glu365. Position 173 (Asn173) interacts with Mg(2+).

The protein belongs to the transketolase family. DXPS subfamily. Homodimer. Requires Mg(2+) as cofactor. It depends on thiamine diphosphate as a cofactor.

The catalysed reaction is D-glyceraldehyde 3-phosphate + pyruvate + H(+) = 1-deoxy-D-xylulose 5-phosphate + CO2. Its pathway is metabolic intermediate biosynthesis; 1-deoxy-D-xylulose 5-phosphate biosynthesis; 1-deoxy-D-xylulose 5-phosphate from D-glyceraldehyde 3-phosphate and pyruvate: step 1/1. In terms of biological role, catalyzes the acyloin condensation reaction between C atoms 2 and 3 of pyruvate and glyceraldehyde 3-phosphate to yield 1-deoxy-D-xylulose-5-phosphate (DXP). The protein is 1-deoxy-D-xylulose-5-phosphate synthase of Mycobacterium avium (strain 104).